The sequence spans 130 residues: Small ribosomal subunit protein uS11 (130 aa).

This sequence belongs to the universal ribosomal protein uS11 family. Part of the 30S ribosomal subunit. Interacts with proteins S7 and S18. Binds to IF-3.

Located on the platform of the 30S subunit, it bridges several disparate RNA helices of the 16S rRNA. Forms part of the Shine-Dalgarno cleft in the 70S ribosome. This Nitratiruptor sp. (strain SB155-2) protein is Small ribosomal subunit protein uS11.